The primary structure comprises 813 residues: G-type lectin S-receptor-like serine/threonine-protein kinase LECRK1 (813 aa).

Residues Met-1–Ala-19 form the signal peptide. Topologically, residues Gln-20 to Ser-466 are extracellular. Residues Gln-22 to Asp-149 form the Bulb-type lectin domain. 6 N-linked (GlcNAc...) asparagine glycosylation sites follow: Asn-24, Asn-57, Asn-164, Asn-168, Asn-219, and Asn-242. Positions Pro-293–Lys-346 constitute an EGF-like; atypical domain. Disulfide bonds link Cys-297–Cys-315, Cys-309–Cys-327, Cys-329–Cys-345, Cys-391–Cys-413, and Cys-395–Cys-401. Positions Cys-354–Val-433 constitute a PAN domain. N-linked (GlcNAc...) asparagine glycans are attached at residues Asn-407 and Asn-441. A helical membrane pass occupies residues Leu-467–Thr-487. Residues Tyr-488–Pro-813 lie on the Cytoplasmic side of the membrane. The Protein kinase domain occupies Ala-523–Val-797. Residues Leu-529–Val-537 and Lys-553 contribute to the ATP site. Asp-647 serves as the catalytic Proton acceptor.

It belongs to the protein kinase superfamily. Ser/Thr protein kinase family. As to quaternary structure, interacts (via kinase domain) with ADF4. Expressed in plumules, radicles and panicles.

The protein localises to the membrane. It catalyses the reaction L-seryl-[protein] + ATP = O-phospho-L-seryl-[protein] + ADP + H(+). The enzyme catalyses L-threonyl-[protein] + ATP = O-phospho-L-threonyl-[protein] + ADP + H(+). Involved in innate immunity. Required for the expression of defense-related genes PR1A, LOX2 and CHS1 upon biotic stresses. Required for basal resistance to the fungal blast (M.grisea), bacterial blight (O.oryzae pv. oryzae, Xoo) and the herbivorous insect brown planthopper (N.lugens, BPH). May be involved in several defense signaling pathways. Involved in the promotion of seed germination. Required for the expression of alpha-amylase genes during seed germination. Involved in resistance against the brown planthopper (BPH). Member of the BPH3 (BPH resistance locus 3) cluster which contains LECRK1, LECRK2 and LECRK3. The protein is G-type lectin S-receptor-like serine/threonine-protein kinase LECRK1 of Oryza sativa subsp. indica (Rice).